The following is a 156-amino-acid chain: Ribosome maturation factor RimP (156 aa).

It belongs to the RimP family.

The protein localises to the cytoplasm. Functionally, required for maturation of 30S ribosomal subunits. The polypeptide is Ribosome maturation factor RimP (Exiguobacterium sp. (strain ATCC BAA-1283 / AT1b)).